A 416-amino-acid polypeptide reads, in one-letter code: Keratin, type I cuticular Ha1 (416 aa).

A head region spans residues 1–56; it reads MPYNFCLPSLSCRTSCSSRPCVPPSCHSCTLPGACNIPANVSNCNWFCEGSFNGSE. One can recognise an IF rod domain in the interval 56 to 367; it reads EKETMQFLND…SLLESEDCNL (312 aa). The interval 57–91 is coil 1A; that stretch reads KETMQFLNDRLASYLEKVRQLERDNAELENLIRER. The interval 92 to 102 is linker 1; sequence SQQQEPLLCPS. Positions 103 to 203 are coil 1B; the sequence is YQSYFKTIEE…HEQEVNTLRC (101 aa). Positions 204-219 are linker 12; the sequence is QLGDRLNVEVDAAPTV. The tract at residues 220 to 363 is coil 2; sequence DLNRVLNETR…NTYRSLLESE (144 aa). The tract at residues 364–416 is tail; the sequence is DCNLPSNPCATTNACSKPIGPCLSNPCTSCVPPAPCTPCAPRPRCGPCNSFVR.

This sequence belongs to the intermediate filament family. As to expression, present in scalp but not in hairless skin. Abundantly expressed in the differentiating cortex of growing (anagen) hair. Expression is restricted to the keratinocytes of the hair cortex and is absent from inner root sheath and medulla.

This is Keratin, type I cuticular Ha1 (KRT31) from Homo sapiens (Human).